The following is a 599-amino-acid chain: ATP-binding cassette sub-family E member 1 (599 aa).

4Fe-4S ferredoxin-type domains lie at 7–37 (RIAI…MGKL) and 46–75 (KIAW…IVNL). Lys-20 is covalently cross-linked (Glycyl lysine isopeptide (Lys-Gly) (interchain with G-Cter in ubiquitin)). 2 ABC transporter domains span residues 79 to 315 (LEKE…FLDG) and 342 to 562 (VKKM…LSQL). Residues 110 to 117 (GTNGIGKS) and 379 to 386 (GENGTGKT) contribute to the ATP site. Ser-417 is subject to Phosphoserine. The residue at position 550 (Thr-550) is a Phosphothreonine.

The protein belongs to the ABC transporter superfamily. ABCE family. In terms of assembly, (Microbial infection) Interacts with Chandipura virus matrix protein. Interacts with PINK1. Interacts with CNOT4. Interacts with PELO. Probably heterodimerizes with RNASEL; this interaction inhibits RNASEL. As to quaternary structure, (Microbial infection) Interacts with HIV-1 proteins Vif and Gag. In terms of assembly, (Microbial infection) Interacts with HIV-2 protein Gag. In terms of processing, ubiquitinated by CNOT4. Ubiquitination mediates the recruitment of autophagy receptors to the mitochondrial outer membrane and initiates mitophagy.

It is found in the cytoplasm. The protein localises to the mitochondrion. The catalysed reaction is GTP + H2O = GDP + phosphate + H(+). It carries out the reaction ATP + H2O = ADP + phosphate + H(+). It catalyses the reaction CTP + H2O = CDP + phosphate + H(+). The enzyme catalyses UTP + H2O = UDP + phosphate + H(+). Functionally, nucleoside-triphosphatase (NTPase) involved in ribosome recycling by mediating ribosome disassembly. Able to hydrolyze ATP, GTP, UTP and CTP. Splits ribosomes into free 60S subunits and tRNA- and mRNA-bound 40S subunits. Acts either after canonical termination facilitated by release factors (ETF1/eRF1) or after recognition of stalled and vacant ribosomes by mRNA surveillance factors (PELO/Pelota). Involved in the No-Go Decay (NGD) pathway: recruited to stalled ribosomes by the Pelota-HBS1L complex, and drives the disassembly of stalled ribosomes, followed by degradation of damaged mRNAs as part of the NGD pathway. Also plays a role in quality control of translation of mitochondrial outer membrane-localized mRNA. As part of the PINK1-regulated signaling, ubiquitinated by CNOT4 upon mitochondria damage; this modification generates polyubiquitin signals that recruit autophagy receptors to the mitochondrial outer membrane and initiate mitophagy. RNASEL-specific protein inhibitor which antagonizes the binding of 2-5A (5'-phosphorylated 2',5'-linked oligoadenylates) to RNASEL. Negative regulator of the anti-viral effect of the interferon-regulated 2-5A/RNASEL pathway. In terms of biological role, (Microbial infection) May act as a chaperone for post-translational events during HIV-1 capsid assembly. Its function is as follows. (Microbial infection) Plays a role in the down-regulation of the 2-5A/RNASEL pathway during encephalomyocarditis virus (EMCV) and HIV-1 infections. This chain is ATP-binding cassette sub-family E member 1 (ABCE1), found in Homo sapiens (Human).